The chain runs to 207 residues: MTARGNLFIVSAPSGAGKSSLISALLKDKPADMQVSVSHTTRAPRPGEVNGQHYHFVNVEEFKALIEQNAFFEWAEVFGNYYGTSRHVIEHTLTQGIDVFLDIDWQGAQQVKAVMPEAIGVFILPPSRDELERRLTGRGQDSQEVIASRMAQAVSEMSHYKEYDFIIVNDDFDTALADLRAIIRSQRLTGASQIHAQNDMLNDLLAG.

The 180-residue stretch at 5–184 folds into the Guanylate kinase-like domain; that stretch reads GNLFIVSAPS…ALADLRAIIR (180 aa). 12–19 lines the ATP pocket; sequence APSGAGKS.

It belongs to the guanylate kinase family.

Its subcellular location is the cytoplasm. The enzyme catalyses GMP + ATP = GDP + ADP. Its function is as follows. Essential for recycling GMP and indirectly, cGMP. The polypeptide is Guanylate kinase (Shewanella sp. (strain MR-7)).